We begin with the raw amino-acid sequence, 599 residues long: Aspartate--tRNA ligase (599 aa).

Residue glutamate 180 coordinates L-aspartate. The interval 204-207 (QIFK) is aspartate. Arginine 226 is an L-aspartate binding site. Residues 226–228 (RDE) and glutamine 235 each bind ATP. An L-aspartate-binding site is contributed by histidine 454. Glutamate 488 provides a ligand contact to ATP. Arginine 495 serves as a coordination point for L-aspartate. 540 to 543 (GLDR) provides a ligand contact to ATP.

It belongs to the class-II aminoacyl-tRNA synthetase family. Type 1 subfamily. Homodimer.

It localises to the cytoplasm. It catalyses the reaction tRNA(Asp) + L-aspartate + ATP = L-aspartyl-tRNA(Asp) + AMP + diphosphate. Catalyzes the attachment of L-aspartate to tRNA(Asp) in a two-step reaction: L-aspartate is first activated by ATP to form Asp-AMP and then transferred to the acceptor end of tRNA(Asp). The chain is Aspartate--tRNA ligase from Clostridium botulinum (strain Alaska E43 / Type E3).